A 717-amino-acid polypeptide reads, in one-letter code: F-box only protein 42 (717 aa).

Residues 1–30 are compositionally biased toward acidic residues; that stretch reads MASSSDSEDDSFMAVDQEETVLEGTMDQDE. Residues 1 to 34 form a disordered region; sequence MASSSDSEDDSFMAVDQEETVLEGTMDQDEEPHP. An F-box domain is found at 44–93; that stretch reads NRSMSELPEEVLEYILSFLSPYQEHKTAALVCKQWYRLIKGVAHQCYHGF. Kelch repeat units follow at residues 132-184, 186-242, 244-293, and 295-342; these read SMYV…VYKD, LVLF…VIDD, MIVF…VIDD, and TILI…LWCH. Positions 361-474 are disordered; sequence RAPLSPSLNS…PSTPSAPEGY (114 aa). Residues 363 to 376 are compositionally biased toward low complexity; that stretch reads PLSPSLNSRPSPIS. A phosphoserine mark is found at S365 and S373. Phosphothreonine is present on T378. 2 stretches are compositionally biased toward polar residues: residues 416–426 and 455–469; these read QRQTPSGSREG and SLDS…STPS. The residue at position 552 (S552) is a Phosphoserine. A compositionally biased stretch (low complexity) spans 570-596; sequence GPSASAALSPPLGSSPGSPGSQSLSSG. The segment at 570–631 is disordered; sequence GPSASAALSP…GHHPPQSLNV (62 aa).

As to quaternary structure, component of some SCF complex, composed of CUL1, SKP1, RBX1 and FBXO42. Interacts (via the kelch domain) with p53/TP53; interaction is direct.

Functionally, substrate-recognition component of some SCF (SKP1-CUL1-F-box protein)-type E3 ubiquitin ligase complex. Specifically recognizes p53/TP53, promoting its ubiquitination and degradation. The chain is F-box only protein 42 (FBXO42) from Homo sapiens (Human).